A 350-amino-acid chain; its full sequence is Phosphoribosylformylglycinamidine cyclo-ligase (350 aa).

This sequence belongs to the AIR synthase family.

It localises to the cytoplasm. It carries out the reaction 2-formamido-N(1)-(5-O-phospho-beta-D-ribosyl)acetamidine + ATP = 5-amino-1-(5-phospho-beta-D-ribosyl)imidazole + ADP + phosphate + H(+). The protein operates within purine metabolism; IMP biosynthesis via de novo pathway; 5-amino-1-(5-phospho-D-ribosyl)imidazole from N(2)-formyl-N(1)-(5-phospho-D-ribosyl)glycinamide: step 2/2. The sequence is that of Phosphoribosylformylglycinamidine cyclo-ligase from Cupriavidus necator (strain ATCC 17699 / DSM 428 / KCTC 22496 / NCIMB 10442 / H16 / Stanier 337) (Ralstonia eutropha).